Reading from the N-terminus, the 475-residue chain is MSPKTETKASVGFKAGVKDYRLTYYTPEYQTKDTDILAAFRVTPQPGVPPEEAGAAVAAESSTGTWTTVWTDGLTSLDRYKGRCYDIEPVPGEESQFIAYVAYPLDLFEEGSVTNLFTSIVGNVFGFKALRALRLEDLRIPPAYSKTFQGPPHGIQVERDKLNKYGRPLLGCTIKPKLGLSAKNYGRAVYECLRGGLDFTKDDENVNSQPFMRWRDRFVFCAEAIYKAQAETGEIKGHYLNATAGTCEEMMKRAVFARELGVPIVMHDYLTGGFTANTSLAHYCRDNGLLLHIHRAMHAVIDRQRIHGMHFRVLAKALRMSGGDHIHAGTVVGKLEGERDVTLGFVDLLRDDFIEKDRSRGIYFTQDWVSMPGVLPVASGGIHVWHMPALTEIFGDDSVLQFGGGTLGHPWGNAPGAVANRVALEACVQARNEGRDLAREGNEVIREASKWSPELAAACEVWKEIKFEFEAIDVL.

Positions 1 to 2 (MS) are excised as a propeptide. Position 3 is an N-acetylproline (Pro3). An N6,N6,N6-trimethyllysine modification is found at Lys14. Substrate-binding residues include Asn123 and Thr173. Lys175 (proton acceptor) is an active-site residue. Residue Lys177 coordinates substrate. The Mg(2+) site is built by Lys201, Asp203, and Glu204. N6-carboxylysine is present on Lys201. Catalysis depends on His294, which acts as the Proton acceptor. Residues Arg295, His327, and Ser379 each contribute to the substrate site.

It belongs to the RuBisCO large chain family. Type I subfamily. Heterohexadecamer of 8 large chains and 8 small chains; disulfide-linked. The disulfide link is formed within the large subunit homodimers. Mg(2+) is required as a cofactor. In terms of processing, the disulfide bond which can form in the large chain dimeric partners within the hexadecamer appears to be associated with oxidative stress and protein turnover.

It is found in the plastid. The protein resides in the chloroplast. The catalysed reaction is 2 (2R)-3-phosphoglycerate + 2 H(+) = D-ribulose 1,5-bisphosphate + CO2 + H2O. The enzyme catalyses D-ribulose 1,5-bisphosphate + O2 = 2-phosphoglycolate + (2R)-3-phosphoglycerate + 2 H(+). In terms of biological role, ruBisCO catalyzes two reactions: the carboxylation of D-ribulose 1,5-bisphosphate, the primary event in carbon dioxide fixation, as well as the oxidative fragmentation of the pentose substrate in the photorespiration process. Both reactions occur simultaneously and in competition at the same active site. In Cedrus deodara (Deodar cedar), this protein is Ribulose bisphosphate carboxylase large chain.